Consider the following 218-residue polypeptide: Ras-related protein Rab-27B (218 aa).

Threonine 2 carries the N-acetylthreonine modification. 16–24 (GDSGVGKTT) contacts GTP. Residues 38-46 (FITTVGIDF) carry the Effector region motif. GTP-binding positions include 74–78 (DTAGQ), 133–136 (NKAD), and 163–165 (SAA). Cysteine 123 and cysteine 188 are oxidised to a cystine. Residues cysteine 216 and cysteine 218 are each lipidated (S-geranylgeranyl cysteine). Residue cysteine 218 is modified to Cysteine methyl ester.

This sequence belongs to the small GTPase superfamily. Rab family. As to quaternary structure, interacts with SYTL2, SYTL4, MYRIP and MLPH. Interacts with RPH3A and RPH3A. Interacts (GDP-bound form preferentially) with DENND10.

The protein localises to the membrane. Its subcellular location is the late endosome. The enzyme catalyses GTP + H2O = GDP + phosphate + H(+). Regulated by guanine nucleotide exchange factors (GEFs) which promote the exchange of bound GDP for free GTP, GTPase activating proteins (GAPs) which increase the GTP hydrolysis activity, and GDP dissociation inhibitors which inhibit the dissociation of the nucleotide from the GTPase. Activated by GEFs such as DENND10. Small GTPase which cycles between active GTP-bound and inactive GDP-bound states. In its active state, binds to a variety of effector proteins to regulate homeostasis of late endocytic pathway, including endosomal positioning, maturation and secretion. Plays a role in NTRK2/TRKB axonal anterograde transport by facilitating the association of NTRK2/TRKB with KLC1. May be involved in targeting uroplakins to urothelial apical membranes. The protein is Ras-related protein Rab-27B (Rab27b) of Rattus norvegicus (Rat).